The sequence spans 67 residues: Putative ATP synthase subunit epsilon, mitochondrial (67 aa).

It belongs to the eukaryotic ATPase epsilon family. F-type ATPases have 2 components, CF(1) - the catalytic core - and CF(0) - the membrane proton channel. CF(1) has five subunits: alpha(3), beta(3), gamma(1), delta(1), epsilon(1). CF(0) seems to have nine subunits: a, b, c, d, e, f, g, F6 and 8 (or A6L).

It is found in the mitochondrion. The protein localises to the mitochondrion inner membrane. Functionally, mitochondrial membrane ATP synthase (F(1)F(0) ATP synthase or Complex V) produces ATP from ADP in the presence of a proton gradient across the membrane which is generated by electron transport complexes of the respiratory chain. F-type ATPases consist of two structural domains, F(1) - containing the extramembraneous catalytic core, and F(0) - containing the membrane proton channel, linked together by a central stalk and a peripheral stalk. During catalysis, ATP synthesis in the catalytic domain of F(1) is coupled via a rotary mechanism of the central stalk subunits to proton translocation. Part of the complex F(1) domain and of the central stalk which is part of the complex rotary element. Rotation of the central stalk against the surrounding alpha(3)beta(3) subunits leads to hydrolysis of ATP in three separate catalytic sites on the beta subunits. This is Putative ATP synthase subunit epsilon, mitochondrial (atp15) from Schizosaccharomyces pombe (strain 972 / ATCC 24843) (Fission yeast).